An 876-amino-acid chain; its full sequence is Serrate RNA effector molecule homolog (876 aa).

The disordered stretch occupies residues M1–D90. At G2 the chain carries N-acetylglycine. S4 carries the post-translational modification Phosphoserine. Y8 carries the post-translational modification Phosphotyrosine. Residues Y8–L73 show a composition bias toward basic and acidic residues. S67, S74, and S136 each carry phosphoserine. K150 is covalently cross-linked (Glycyl lysine isopeptide (Lys-Gly) (interchain with G-Cter in SUMO2)). The interval E272 to K413 is disordered. Residues D297–K347 are compositionally biased toward basic and acidic residues. Residues S370–D387 are compositionally biased toward acidic residues. A compositionally biased stretch (basic and acidic residues) spans E388–K413. S493 is modified (phosphoserine). Position 544 is a phosphothreonine (T544). S570 bears the Phosphoserine mark. The segment at E575 to I597 is disordered. T671 carries the post-translational modification Phosphothreonine. S679 is modified (phosphoserine). 3 positions are modified to omega-N-methylarginine: R833, R840, and R850. The segment at N835 to V854 is disordered.

The protein belongs to the ARS2 family. As to quaternary structure, interacts with CASP8AP2, ERBB4, NCBP1/CBP80 and DROSHA. Interacts with LUZP4. Interacts with NCBP2/CBP20 and NCBP3. Interacts with MTREX.

It localises to the nucleus. Its subcellular location is the nucleoplasm. The protein localises to the cytoplasm. Its function is as follows. Acts as a mediator between the cap-binding complex (CBC) and the primary microRNAs (miRNAs) processing machinery during cell proliferation. Contributes to the stability and delivery of capped primary miRNA transcripts to the primary miRNA processing complex containing DGCR8 and DROSHA, thereby playing a role in RNA-mediated gene silencing (RNAi) by miRNAs. Binds capped RNAs (m7GpppG-capped RNA); however interaction is probably mediated via its interaction with NCBP1/CBP80 component of the CBC complex. Involved in cell cycle progression at S phase. Does not directly confer arsenite resistance but rather modulates arsenic sensitivity. Independently of its activity on miRNAs, necessary and sufficient to promote neural stem cell self-renewal. Does so by directly binding SOX2 promoter and positively regulating its transcription. The polypeptide is Serrate RNA effector molecule homolog (SRRT) (Bos taurus (Bovine)).